Here is a 277-residue protein sequence, read N- to C-terminus: Homeobox protein Nkx-6.2 (277 aa).

A repressor domain region spans residues 89–142; that stretch reads AGVYFGPAAAVARGYPKPLAELPGRPPIFWPGVVQGAPWRDPRLAGPAPAGGVL. 2 disordered regions span residues 132–155 and 210–250; these read LAGP…RPTF and EMAS…DDEK. Positions 148 to 207 form a DNA-binding region, homeobox; sequence KKHSRPTFSGQQIFALEKTFEQTKYLAGPERARLAYSLGMTESQVKVWFQNRRTKWRKRH. Residues 216-226 show a composition bias toward basic and acidic residues; sequence KKQDSDAEKLK.

As to expression, highest expression in brain.

The protein localises to the nucleus. Functionally, transcription factor with repressor activity involved in the regulation of axon-glial interactions at myelin paranodes in oligodendrocytes. Binds to the consensus DNA sequence 5'-(A/T)TTAATGA-3'. In oligodendrocytes, binds to MBP and PLP1 promoter regions. This Homo sapiens (Human) protein is Homeobox protein Nkx-6.2 (NKX6-2).